The sequence spans 144 residues: MTDTDFDNAADLHNLMIKTLEPEELYKKLENNLRKIETSYLDSKHCQDFKRKIEYYKIVPLISETKEIIKVLIQKIETLEIKEGSPKHSKIDEYMSVLSVPGLNLGEILVLVKELLTIDNDLPKNAHVHENIQDDVVYGNFSPN.

A coiled-coil region spans residues E23–K82.

This is an uncharacterized protein from Acanthamoeba polyphaga mimivirus (APMV).